Reading from the N-terminus, the 1863-residue chain is C-myc promoter-binding protein (1863 aa).

Residues 42-200 (KEPITDVSVI…AVYLCYKKSV (159 aa)) form the MABP domain. The uDENN domain occupies 192–364 (VYLCYKKSVA…KVPFPSPQRP (173 aa)). The cDENN domain maps to 385-521 (PLPLSGGKFS…PCKNLMNTLN (137 aa)). The dDENN domain maps to 523–641 (LHQQLAKLQQ…CSFVSDKDAS (119 aa)). S731 carries the post-translational modification Phosphoserine. 2 PPR repeats span residues 772 to 808 (WFIC…MDPP) and 809 to 843 (DEVC…GIDP). The disordered stretch occupies residues 905–952 (DLGYNSLSKDEVRRGDTSTEDIQEEKDKKGSDCSSLSESESTKGSADC). The span at 912 to 921 (SKDEVRRGDT) shows a compositional bias: basic and acidic residues. Residues 917-933 (RRGDTSTEDIQEEKDKK) carry the Bipartite nuclear localization signal motif. Residues 936–949 (DCSSLSESESTKGS) show a composition bias toward low complexity. S1015, S1035, S1099, S1151, and S1152 each carry phosphoserine. The disordered stretch occupies residues 1075 to 1111 (TRPNTLDIGKPPLRSKRDSLEKESSDDDTPFDGSNYL). The interval 1177–1202 (TEQQQKEEEEEDEDDSKSISTPSARR) is disordered. A phosphoserine mark is found at S1225, S1240, and S1251. 2 disordered regions span residues 1237–1306 (NKKS…SPSF) and 1348–1375 (SKDQ…TDED). Residues 1269–1279 (TKSEEKPRDRL) show a composition bias toward basic and acidic residues. S1281 is subject to Phosphoserine. Composition is skewed to polar residues over residues 1297-1306 (DTLTHSSPSF) and 1348-1371 (SKDQ…STSL). A phosphoserine mark is found at S1508, S1587, S1589, and S1591.

In terms of tissue distribution, expressed ubiquitously. Highest expression in bone marrow, medium in peripheral blood lymphocytes and lowest in spleen. In brain, breast, and prostate, higher expression was seen in normal cells than in tumor cells. Expression is regulated in a growth- and cell cycle-dependent manner.

Its subcellular location is the nucleus. Probable guanine nucleotide exchange factor (GEF) which may activate RAB10. Promotes the exchange of GDP to GTP, converting inactive GDP-bound Rab proteins into their active GTP-bound form. According to PubMed:8056341, it may bind to ISRE-like element (interferon-stimulated response element) of MYC P2 promoter. This is C-myc promoter-binding protein (DENND4A) from Homo sapiens (Human).